A 160-amino-acid chain; its full sequence is Ubiquitin-conjugating enzyme E2 16 (160 aa).

Positions 3–153 (SSIKRLHKEY…VRCTTYLYAK (151 aa)) constitute a UBC core domain. Cys-90 functions as the Glycyl thioester intermediate in the catalytic mechanism.

The protein belongs to the ubiquitin-conjugating enzyme family.

The enzyme catalyses S-ubiquitinyl-[E1 ubiquitin-activating enzyme]-L-cysteine + [E2 ubiquitin-conjugating enzyme]-L-cysteine = [E1 ubiquitin-activating enzyme]-L-cysteine + S-ubiquitinyl-[E2 ubiquitin-conjugating enzyme]-L-cysteine.. Its pathway is protein modification; protein ubiquitination. In terms of biological role, catalyzes the covalent attachment of ubiquitin to other proteins. The sequence is that of Ubiquitin-conjugating enzyme E2 16 (ubc16) from Schizosaccharomyces pombe (strain 972 / ATCC 24843) (Fission yeast).